We begin with the raw amino-acid sequence, 119 residues long: Putative mating-type protein A2 (119 aa).

Positions 38-100 form a DNA-binding region, homeobox; TALE-type; sequence KPYRGHRFTK…NRRRKEKTIT (63 aa).

This sequence belongs to the TALE/M-ATYP homeobox family.

The protein resides in the nucleus. Functionally, probably not a functional protein. Cells lacking A2 show no obvious alterations in mating, sporulation and cell growth. The polypeptide is Putative mating-type protein A2 (MATA2) (Saccharomyces cerevisiae (Baker's yeast)).